Here is a 365-residue protein sequence, read N- to C-terminus: Outer capsid protein sigma-3 (365 aa).

The segment at 51-73 adopts a CCHC-type zinc-finger fold; it reads CMHCLGVVGSLQRKLKHLPHHRC.

Belongs to the orthoreovirus sigma-3 protein family. As to quaternary structure, heterohexamer of three sigma-3 and three Mu-1 proteins. The RNA-binding form is probably a homodimer. Post-translationally, cleaved during virus the endosomal proteolytic disassembly of the outer capsid.

The protein localises to the virion. It is found in the host cytoplasm. The protein resides in the host nucleus. Functionally, stimulates translation by blocking the activation of the dsRNA-dependent protein kinase EIF2AK2/PKR, thereby inhibiting the host interferon response. Sigma3 prevents the activation of EIF2AK2 by competing with the kinase for dsRNA-binding. Its function is as follows. The viral outer shell polypeptides, of which sigma-3 is one, impose structural constraints that prevent elongation of nascent transcripts by the RNA-dependent RNA polymerase lambda-3. This is Outer capsid protein sigma-3 (S4) from Reovirus type 3 (strain Dearing) (T3D).